The following is a 671-amino-acid chain: Probable potassium transport system protein Kup 2 (671 aa).

12 helical membrane passes run 18 to 38 (GFLIALGIVYGDIGTSPLYAM), 60 to 80 (VSLVIWTLTLITTVKYVLIAL), 103 to 123 (WLIVPAMIGGATLLADGALTP), 149 to 169 (VTTLIILAFLFLIQRFGASLV), 173 to 193 (FGPIMFIWFGFLGVSGLINSF), 218 to 238 (AGFFILGSIFLVTTGAEALYS), 252 to 272 (WPFVKICIILSYCGQGAWLLA), 292 to 312 (MVIYVVILSTLAAIIASQALI), 343 to 363 (LYIPAVNFALWVTTSFFVLYF), 373 to 393 (YSLAITITMLMTTTLLTYFLI), 402 to 422 (IAFISIGLFCIEGSFFAASLV), and 424 to 444 (FINGAYIVVLIALAIIFVMFI).

This sequence belongs to the HAK/KUP transporter (TC 2.A.72) family.

The protein localises to the cell membrane. The catalysed reaction is K(+)(in) + H(+)(in) = K(+)(out) + H(+)(out). Its function is as follows. Transport of potassium into the cell. Likely operates as a K(+):H(+) symporter. This Lactococcus lactis subsp. cremoris (strain SK11) protein is Probable potassium transport system protein Kup 2.